A 277-amino-acid chain; its full sequence is MKQLYGVIGNPIGHSLSPVMHNDAFEHLNMDAHYHAFLVKEEVLGEAVRGLKALGISGFNVTTPHKVAIMDYLDEIDPLAKQIGAVNTVVHKDGKLIGYNTDGIGFVRALQSISSEPLQEKRILLLGAGGASRAIYFSLADAGVKEIDVANRTVDKAKELIAACTATVHSVALSLEKATKEQGSYDIIIQTTTIGMHPRVEHTPLQISSLKKGTIVSDIIYNPFETKILCEAKEQGAIIQNGIDMFVYQGALAFEMWTGCVPNIERMKQLVIRKLGG.

Residues 15-17 (SLS) and Thr62 each bind shikimate. Catalysis depends on Lys66, which acts as the Proton acceptor. Shikimate is bound by residues Asn87 and Asp102. Residues 127–131 (GAGGA), 151–156 (NRTVDK), and Ile219 each bind NADP(+). Tyr221 provides a ligand contact to shikimate. Residue Gly242 coordinates NADP(+).

The protein belongs to the shikimate dehydrogenase family. As to quaternary structure, homodimer.

It catalyses the reaction shikimate + NADP(+) = 3-dehydroshikimate + NADPH + H(+). It functions in the pathway metabolic intermediate biosynthesis; chorismate biosynthesis; chorismate from D-erythrose 4-phosphate and phosphoenolpyruvate: step 4/7. In terms of biological role, involved in the biosynthesis of the chorismate, which leads to the biosynthesis of aromatic amino acids. Catalyzes the reversible NADPH linked reduction of 3-dehydroshikimate (DHSA) to yield shikimate (SA). In Bacillus thuringiensis subsp. konkukian (strain 97-27), this protein is Shikimate dehydrogenase (NADP(+)).